Here is a 792-residue protein sequence, read N- to C-terminus: Xaa-Pro dipeptidyl-peptidase (792 aa).

Catalysis depends on charge relay system residues Ser-363, Asp-482, and His-513.

The protein belongs to the peptidase S15 family. Homodimer.

It is found in the cytoplasm. It carries out the reaction Hydrolyzes Xaa-Pro-|- bonds to release unblocked, N-terminal dipeptides from substrates including Ala-Pro-|-p-nitroanilide and (sequentially) Tyr-Pro-|-Phe-Pro-|-Gly-Pro-|-Ile.. In terms of biological role, removes N-terminal dipeptides sequentially from polypeptides having unsubstituted N-termini provided that the penultimate residue is proline. This chain is Xaa-Pro dipeptidyl-peptidase, found in Lactobacillus delbrueckii subsp. bulgaricus (strain ATCC 11842 / DSM 20081 / BCRC 10696 / JCM 1002 / NBRC 13953 / NCIMB 11778 / NCTC 12712 / WDCM 00102 / Lb 14).